The sequence spans 330 residues: 4-hydroxythreonine-4-phosphate dehydrogenase (330 aa).

T133 is a binding site for substrate. A divalent metal cation contacts are provided by H161, H206, and H261. Substrate-binding residues include K269, N278, and R287.

Belongs to the PdxA family. As to quaternary structure, homodimer. Zn(2+) is required as a cofactor. Requires Mg(2+) as cofactor. It depends on Co(2+) as a cofactor.

Its subcellular location is the cytoplasm. The enzyme catalyses 4-(phosphooxy)-L-threonine + NAD(+) = 3-amino-2-oxopropyl phosphate + CO2 + NADH. Its pathway is cofactor biosynthesis; pyridoxine 5'-phosphate biosynthesis; pyridoxine 5'-phosphate from D-erythrose 4-phosphate: step 4/5. In terms of biological role, catalyzes the NAD(P)-dependent oxidation of 4-(phosphooxy)-L-threonine (HTP) into 2-amino-3-oxo-4-(phosphooxy)butyric acid which spontaneously decarboxylates to form 3-amino-2-oxopropyl phosphate (AHAP). The protein is 4-hydroxythreonine-4-phosphate dehydrogenase of Xylella fastidiosa (strain 9a5c).